We begin with the raw amino-acid sequence, 119 residues long: DNA-binding protein inhibitor ID-3 (119 aa).

The 53-residue stretch at 28 to 80 (RGKSPSAEEPLSLLDDMNHCYSRLRELVPGVPRGTQLSQVEILQRVIDYILDL) folds into the bHLH domain.

Homodimer, and heterodimer with other HLH proteins. Interacts with COPS5 and COPS7A. Interacts with IFI204. Interacts with GATA4 and NKX2-5. Interacts with ANKRD2; both proteins cooperate in myoblast differentiation. Interacts with CLOCK and BMAL1. Post-translationally, phosphorylated in vitro by CDC2 and PKC.

The protein localises to the nucleus. In terms of biological role, transcriptional regulator (lacking a basic DNA binding domain) which negatively regulates the basic helix-loop-helix (bHLH) transcription factors by forming heterodimers and inhibiting their DNA binding and transcriptional activity. Implicated in regulating a variety of cellular processes, including cellular growth, senescence, differentiation, apoptosis, angiogenesis, and neoplastic transformation. Involved in myogenesis by inhibiting skeletal muscle and cardiac myocyte differentiation and promoting muscle precursor cells proliferation. Inhibits the binding of E2A-containing protein complexes to muscle creatine kinase E-box enhancer. Regulates the circadian clock by repressing the transcriptional activator activity of the CLOCK-BMAL1 heterodimer. In Rattus norvegicus (Rat), this protein is DNA-binding protein inhibitor ID-3 (Id3).